The following is a 618-amino-acid chain: Acetolactate synthase (618 aa).

The segment at 1 to 30 (MSAPTKPHSPTFKPEPHSAANEPKHPAARP) is disordered. E85 lines the thiamine diphosphate pocket. Residues R187, 293–314 (HGTV…LGTR), and 336–355 (DIDP…IVGD) contribute to the FAD site. The thiamine pyrophosphate binding stretch occupies residues 429–509 (QHQMWAAQFI…VKVALINNGN (81 aa)). Mg(2+)-binding residues include D480 and N507.

The protein belongs to the TPP enzyme family. It depends on Mg(2+) as a cofactor. Requires thiamine diphosphate as cofactor.

The catalysed reaction is 2 pyruvate + H(+) = (2S)-2-acetolactate + CO2. It participates in amino-acid biosynthesis; L-isoleucine biosynthesis; L-isoleucine from 2-oxobutanoate: step 1/4. The protein operates within amino-acid biosynthesis; L-valine biosynthesis; L-valine from pyruvate: step 1/4. In Mycobacterium bovis (strain ATCC BAA-935 / AF2122/97), this protein is Acetolactate synthase (ilvB).